The following is a 273-amino-acid chain: Glutamate racemase (273 aa).

Substrate is bound by residues 19-20 and 51-52; these read DS and YG. Cysteine 83 acts as the Proton donor/acceptor in catalysis. 84–85 lines the substrate pocket; that stretch reads NT. The active-site Proton donor/acceptor is cysteine 198. 199–200 provides a ligand contact to substrate; sequence TH.

This sequence belongs to the aspartate/glutamate racemases family.

It catalyses the reaction L-glutamate = D-glutamate. Its pathway is cell wall biogenesis; peptidoglycan biosynthesis. Its function is as follows. Provides the (R)-glutamate required for cell wall biosynthesis. This is Glutamate racemase from Agrobacterium fabrum (strain C58 / ATCC 33970) (Agrobacterium tumefaciens (strain C58)).